A 150-amino-acid polypeptide reads, in one-letter code: U1 small nuclear ribonucleoprotein C (150 aa).

The Matrin-type zinc finger occupies 4 to 36 (YYCDYCKSYLTHDTMSVRKSHLQGRNHIKFYCD). Positions 66–127 (SDAKKSNGSS…PPNLSGLPLP (62 aa)) are disordered. The segment covering 80 to 92 (DIDKKENSSDHNK) has biased composition (basic and acidic residues). Over residues 103–112 (NDNDDDDDEM) the composition is skewed to acidic residues.

This sequence belongs to the U1 small nuclear ribonucleoprotein C family. U1 snRNP is composed of the 7 core Sm proteins B/B', D1, D2, D3, E, F and G that assemble in a heptameric protein ring on the Sm site of the small nuclear RNA to form the core snRNP, and at least 3 U1 snRNP-specific proteins U1-70K, U1-A and U1-C. U1-C interacts with U1 snRNA and the 5' splice-site region of the pre-mRNA.

The protein localises to the nucleus. Functionally, component of the spliceosomal U1 snRNP, which is essential for recognition of the pre-mRNA 5' splice-site and the subsequent assembly of the spliceosome. U1-C is directly involved in initial 5' splice-site recognition for both constitutive and regulated alternative splicing. The interaction with the 5' splice-site seems to precede base-pairing between the pre-mRNA and the U1 snRNA. Stimulates commitment or early (E) complex formation by stabilizing the base pairing of the 5' end of the U1 snRNA and the 5' splice-site region. This chain is U1 small nuclear ribonucleoprotein C, found in Candida albicans (strain WO-1) (Yeast).